A 202-amino-acid polypeptide reads, in one-letter code: Probable adenylyl-sulfate kinase (202 aa).

36 to 43 (GLSGSGKS) is an ATP binding site. The active-site Phosphoserine intermediate is Ser-110.

Belongs to the APS kinase family.

It catalyses the reaction adenosine 5'-phosphosulfate + ATP = 3'-phosphoadenylyl sulfate + ADP + H(+). The protein operates within sulfur metabolism; hydrogen sulfide biosynthesis; sulfite from sulfate: step 2/3. Functionally, catalyzes the synthesis of activated sulfate. The polypeptide is Probable adenylyl-sulfate kinase (Halalkalibacterium halodurans (strain ATCC BAA-125 / DSM 18197 / FERM 7344 / JCM 9153 / C-125) (Bacillus halodurans)).